We begin with the raw amino-acid sequence, 806 residues long: Glycerol-3-phosphate acyltransferase (806 aa).

An HXXXXD motif motif is present at residues 305-310; that stretch reads CHRSHM.

Belongs to the GPAT/DAPAT family.

The protein localises to the cell inner membrane. It carries out the reaction sn-glycerol 3-phosphate + an acyl-CoA = a 1-acyl-sn-glycero-3-phosphate + CoA. It participates in phospholipid metabolism; CDP-diacylglycerol biosynthesis; CDP-diacylglycerol from sn-glycerol 3-phosphate: step 1/3. The protein is Glycerol-3-phosphate acyltransferase of Salmonella paratyphi A (strain ATCC 9150 / SARB42).